The sequence spans 487 residues: Putative sugar kinase YoaC (487 aa).

This sequence belongs to the FGGY kinase family.

This is Putative sugar kinase YoaC (yoaC) from Bacillus subtilis (strain 168).